A 528-amino-acid polypeptide reads, in one-letter code: Phosphoenolpyruvate carboxykinase (ATP) (528 aa).

The substrate site is built by R56, Y192, and K198. ATP is bound by residues K198, H217, and 233–241 (GLSGTGKTT). Mn(2+) contacts are provided by K198 and H217. Residue D254 participates in Mn(2+) binding. The ATP site is built by E282, R319, and T444. Residue R319 participates in substrate binding.

The protein belongs to the phosphoenolpyruvate carboxykinase (ATP) family. Mn(2+) is required as a cofactor.

It localises to the cytoplasm. The enzyme catalyses oxaloacetate + ATP = phosphoenolpyruvate + ADP + CO2. The protein operates within carbohydrate biosynthesis; gluconeogenesis. Functionally, involved in the gluconeogenesis. Catalyzes the conversion of oxaloacetate (OAA) to phosphoenolpyruvate (PEP) through direct phosphoryl transfer between the nucleoside triphosphate and OAA. This Lysinibacillus sphaericus (strain C3-41) protein is Phosphoenolpyruvate carboxykinase (ATP).